Here is a 171-residue protein sequence, read N- to C-terminus: Small ribosomal subunit protein mS41 (171 aa).

Residues 1–23 (MSLFKSLVARSGSGIRAAQIARQ) constitute a mitochondrion transit peptide. A disordered region spans residues 122 to 141 (REHKKGKKKNGGERNAKTVL).

The protein belongs to the mitochondrion-specific ribosomal protein mS41 family.

Its subcellular location is the mitochondrion. Its function is as follows. Involved in telomere length regulation. This chain is Small ribosomal subunit protein mS41 (FYV4), found in Scheffersomyces stipitis (strain ATCC 58785 / CBS 6054 / NBRC 10063 / NRRL Y-11545) (Yeast).